Reading from the N-terminus, the 1225-residue chain is MKRFLHRVKWPLLLSSIAVSLGIVAVACAQPNSRTIENLFRPSSAFTDKNDGSINATLYKALENREGLTQYLTMRLAPVLRNFYEENVDDDIKRNLRTFNTDTDNSFVNQEQNLRNQYRGDYLVRLQTDILDNTGGNQANWKLRDVNNKIVDDFINKLFTKNFVEYVDKSVGVLSTPLKGLIENQSNWNNIKIQAKFVDKNKRLRINNDAVYAAIQDKLLDQFVTNENPNLVSRVVFTNETPNDGFDNYFNPDLIKSPTPSYQFQVFNKYNQQDNSIKGANGFHILASNLQSYVNTNNKTIDIPNKFSSDSGGKLLLKASDMFDTFDPSFSAAFIQGYLALQKKSKGAEQTEYTKLEKDKSIIENFFVENNSAKAAMKSASSSSQTTTVHKTDLAKIFKENETTKSTDVFKGEYQKKFSNATSTSNSDSSNNSAIVDLKELKKDNNSQPDLILARGKDGIHLMGVDGGGYYLSESGRDVNKQKQFLLFRALQTKYGLIDTNTTYDFKLFDEVKKHFDKNRVLFLFNALFKLVDSKESNFLSFPQFKKFSDSIITVKNELKDLVESQYQQIVFNEVATAENKVALKLAERNQPFIDNERNKQIWMNGLAAVLPYEQDSKTGHYNELGIYYKDIIDKVSSNTSNSNSNSNSSSSDPFSKKIIDKLKENKKKVEAAVKKHVDELKVSVIPSPQYSQIILVDTKLSSDPRNTSLALNLALNAVLSSDELQNTIRRDYFVNDDQFKQAIDLDKLTFKNWNSLNNENWNIFKYTYLFDLFQKQANPSIFGNGVNESSTDNKPKINGVLDSLYNSLNLEERLDSNDLINYYSYLYTVQWLLKDNLKNLKQNLQAKLSRTTNSFLVWSLASDKDRNNTASQAMSVSSSKSVLVKMANNVASQTNQDFTKQEQQNPNYVFGSSAYNWTNNKTPTVNSAANDISSLYYTKNNGSSSTSLTLMQKSAQQTNNQQRRFGFHGIVTNTSSNNLPDAVRNRLFTSFVSQSEKSSSNGGQAQLQSTQSSGSNETIYKGALFSFGSLTKLIETIDNIPTQAEFDALYNHLTSNLNINVTGVDRSKSLQEQKTNLKNFANSNFNNTQTVQLKQAQSKTNNSNFNDVFSRFEGYIGTNKTSNYSSYNFLQDNQIYHAVYAKQINLEDVSMLGSDSLNSTDSNNSKRLDLSLEEFLSTVALEALNPNNQTQAINALIANAKNGLVRVGDNRLFSAISSQWVRKF.

The N-terminal stretch at 1–27 is a signal peptide; sequence MKRFLHRVKWPLLLSSIAVSLGIVAVA. Residue cysteine 28 is the site of N-palmitoyl cysteine attachment. The S-diacylglycerol cysteine moiety is linked to residue cysteine 28. The disordered stretch occupies residues 995 to 1014; sequence QSEKSSSNGGQAQLQSTQSS.

The protein belongs to the MG307/MG309/MG338 family.

The protein resides in the cell membrane. This is an uncharacterized protein from Mycoplasma genitalium (strain ATCC 33530 / DSM 19775 / NCTC 10195 / G37) (Mycoplasmoides genitalium).